We begin with the raw amino-acid sequence, 441 residues long: tRNA modification GTPase MnmE (441 aa).

(6S)-5-formyl-5,6,7,8-tetrahydrofolate-binding residues include Arg-21, Glu-78, and Lys-117. The TrmE-type G domain maps to 211 to 363 (GIVMTIVGKP…LENKIVSKVK (153 aa)). Asn-221 is a binding site for K(+). Residues 221 to 226 (NSGKST), 240 to 246 (TDIPGTT), and 265 to 268 (DTAG) contribute to the GTP site. Ser-225 contributes to the Mg(2+) binding site. Residues Thr-240, Ile-242, and Thr-245 each contribute to the K(+) site. Mg(2+) is bound at residue Thr-246. Lys-441 contributes to the (6S)-5-formyl-5,6,7,8-tetrahydrofolate binding site.

Belongs to the TRAFAC class TrmE-Era-EngA-EngB-Septin-like GTPase superfamily. TrmE GTPase family. Homodimer. Heterotetramer of two MnmE and two MnmG subunits. K(+) serves as cofactor.

The protein resides in the cytoplasm. In terms of biological role, exhibits a very high intrinsic GTPase hydrolysis rate. Involved in the addition of a carboxymethylaminomethyl (cmnm) group at the wobble position (U34) of certain tRNAs, forming tRNA-cmnm(5)s(2)U34. The polypeptide is tRNA modification GTPase MnmE (Thermosipho melanesiensis (strain DSM 12029 / CIP 104789 / BI429)).